Consider the following 151-residue polypeptide: Macrodomain Ter protein (151 aa).

The protein belongs to the MatP family. Homodimer.

Its subcellular location is the cytoplasm. Required for spatial organization of the terminus region of the chromosome (Ter macrodomain) during the cell cycle. Prevents early segregation of duplicated Ter macrodomains during cell division. Binds specifically to matS, which is a 13 bp signature motif repeated within the Ter macrodomain. The sequence is that of Macrodomain Ter protein from Cronobacter sakazakii (strain ATCC BAA-894) (Enterobacter sakazakii).